A 202-amino-acid chain; its full sequence is Osteoclast-stimulating factor 1 (202 aa).

The SH3 domain occupies 12 to 71 (GQVKVFRALYTFEPRTPDELYFEEGDIIYISDMSDTNWWKGTCKGRTGLIPSNYVAEQAE). ANK repeat units follow at residues 72–101 (SIDNPLHEAAKRGNLSWLRECLDNQVGVNG), 105–135 (AGNTALYWACHGGHKDIVDVLFTQANLELNQ), and 139–168 (LGDTALHAAAWKGYADIVEMLLAKGARTDL).

It localises to the cytoplasm. Induces bone resorption, acting probably through a signaling cascade which results in the secretion of factor(s) enhancing osteoclast formation and activity. The sequence is that of Osteoclast-stimulating factor 1 (OSTF1) from Gallus gallus (Chicken).